Reading from the N-terminus, the 24-residue chain is Ascaphin-3 (24 aa).

Expressed by the skin glands.

Its subcellular location is the secreted. Antimicrobial peptide that shows higher potency against Gram-negative bacteria than against Gram-positive bacteria. Has a very week hemolytic activity. In Ascaphus truei (Coastal tailed frog), this protein is Ascaphin-3.